Reading from the N-terminus, the 129-residue chain is Lysozyme C (129 aa).

One can recognise a C-type lysozyme domain in the interval 1-129; the sequence is KVFSKCELAH…LSEYLASCNL (129 aa). Intrachain disulfides connect Cys6-Cys127, Cys30-Cys115, Cys65-Cys80, and Cys76-Cys94. Catalysis depends on residues Glu35 and Asp53. Ca(2+) is bound by residues Lys82, Asp85, Asn87, Asp90, and Asp91.

The protein belongs to the glycosyl hydrolase 22 family. In terms of assembly, monomer. Requires Ca(2+) as cofactor.

It catalyses the reaction Hydrolysis of (1-&gt;4)-beta-linkages between N-acetylmuramic acid and N-acetyl-D-glucosamine residues in a peptidoglycan and between N-acetyl-D-glucosamine residues in chitodextrins.. Lysozymes have primarily a bacteriolytic function; those in tissues and body fluids are associated with the monocyte-macrophage system and enhance the activity of immunoagents. This chain is Lysozyme C (LYZ), found in Equus asinus (Donkey).